A 957-amino-acid polypeptide reads, in one-letter code: Glycine dehydrogenase (decarboxylating) (957 aa).

Residue Lys-708 is modified to N6-(pyridoxal phosphate)lysine.

Belongs to the GcvP family. As to quaternary structure, the glycine cleavage system is composed of four proteins: P, T, L and H. Pyridoxal 5'-phosphate is required as a cofactor.

The enzyme catalyses N(6)-[(R)-lipoyl]-L-lysyl-[glycine-cleavage complex H protein] + glycine + H(+) = N(6)-[(R)-S(8)-aminomethyldihydrolipoyl]-L-lysyl-[glycine-cleavage complex H protein] + CO2. Functionally, the glycine cleavage system catalyzes the degradation of glycine. The P protein binds the alpha-amino group of glycine through its pyridoxal phosphate cofactor; CO(2) is released and the remaining methylamine moiety is then transferred to the lipoamide cofactor of the H protein. The chain is Glycine dehydrogenase (decarboxylating) from Escherichia coli (strain SE11).